Consider the following 439-residue polypeptide: Phthalate 4,5-dioxygenase oxygenase subunit (439 aa).

The region spanning 27–134 (WTPVCLLEEV…TREWGGFVWA (108 aa)) is the Rieske domain. Residues Cys70, His72, Cys89, and His92 each coordinate [2Fe-2S] cluster. Positions 181 and 186 each coordinate Fe cation.

The protein belongs to the bacterial ring-hydroxylating dioxygenase alpha subunit family. In terms of assembly, this dioxygenase system consists of two proteins: phthalate oxygenase and phthalate oxygenase reductase. [2Fe-2S] cluster serves as cofactor. Fe cation is required as a cofactor.

It catalyses the reaction phthalate + NADH + O2 + H(+) = cis-4,5-dihydroxycyclohexa-2,6-diene-1,2-dicarboxylate + NAD(+). Its pathway is xenobiotic degradation; phthalate degradation; 3,4-dihydroxybenzoate from phthalate: step 1/3. The polypeptide is Phthalate 4,5-dioxygenase oxygenase subunit (pht3) (Pseudomonas putida (Arthrobacter siderocapsulatus)).